Reading from the N-terminus, the 187-residue chain is Biogenesis of lysosome-related organelles complex 1 subunit 5 (187 aa).

The tract at residues 1 to 27 is disordered; sequence MSGGGTETPVACEAAQGGGGKKRDSLG. The residue at position 2 (S2) is an N-acetylserine.

This sequence belongs to the BLOC1S5 family. Octamer composed of one copy each BLOC1S1, BLOC1S2, BLOC1S3, BLOC1S4, BLOC1S5, BLOC1S6, DTNBP1/BLOC1S7 and SNAPIN/BLOC1S8. The BLOC-1 complex associates with the AP-3 protein complex and membrane protein cargos. Interacts with BLOC1S4, BLOC1S6, DTNBP1/BLOC1S7 and PI4K2A. Component of the biogenesis of lysosome-related organelles complex 1 (BLOC-1) composed of BLOC1S1, BLOC1S2, BLOC1S3, BLOC1S4, BLOC1S5, BLOC1S6, DTNBP1/BLOC1S7 and SNAPIN/BLOC1S8.

Functionally, component of the BLOC-1 complex, a complex that is required for normal biogenesis of lysosome-related organelles (LRO), such as platelet dense granules and melanosomes. In concert with the AP-3 complex, the BLOC-1 complex is required to target membrane protein cargos into vesicles assembled at cell bodies for delivery into neurites and nerve terminals. The BLOC-1 complex, in association with SNARE proteins, is also proposed to be involved in neurite extension. Plays a role in intracellular vesicle trafficking. This chain is Biogenesis of lysosome-related organelles complex 1 subunit 5 (Bloc1s5), found in Rattus norvegicus (Rat).